The chain runs to 78 residues: uncharacterized protein (78 aa).

This is an uncharacterized protein from Enterobacteria phage RB51 (Bacteriophage RB51).